Here is a 284-residue protein sequence, read N- to C-terminus: 2-dehydro-3-deoxyphosphooctonate aldolase (284 aa).

This sequence belongs to the KdsA family.

Its subcellular location is the cytoplasm. It catalyses the reaction D-arabinose 5-phosphate + phosphoenolpyruvate + H2O = 3-deoxy-alpha-D-manno-2-octulosonate-8-phosphate + phosphate. The protein operates within carbohydrate biosynthesis; 3-deoxy-D-manno-octulosonate biosynthesis; 3-deoxy-D-manno-octulosonate from D-ribulose 5-phosphate: step 2/3. It participates in bacterial outer membrane biogenesis; lipopolysaccharide biosynthesis. In Photobacterium profundum (strain SS9), this protein is 2-dehydro-3-deoxyphosphooctonate aldolase.